A 686-amino-acid chain; its full sequence is Mitochondrial Rho GTPase 1 (686 aa).

The Cytoplasmic portion of the chain corresponds to 1–648; it reads MPRRDLVRIV…PAQRIRVVAR (648 aa). Residues 4-172 form the Miro 1 domain; the sequence is RDLVRIVLVG…FYFAQKAVLH (169 aa). GTP is bound by residues 13–20, 59–63, and 117–120; these read GDDGVGKS, DTSSN, and NKID. EF-hand domains are found at residues 188–223 and 341–376; these read KCLE…CFST and LGNQ…SPGN. Ca(2+)-binding residues include Asp201, Asp203, Asp205, Glu212, Asp354, Asp356, Asp358, and Glu365. The Miro 2 domain occupies 455–624; that stretch reads RNVFLCYVLG…WVAITRVALD (170 aa). GTP is bound by residues 464-471, 506-510, and 574-577; these read GATGSGKT, EMEGV, and TKSD. Residues 649–665 form a helical; Anchor for type IV membrane protein membrane-spanning segment; sequence WGLAATTISAIVAVWMK. Residues 666–686 are Mitochondrial intermembrane-facing; sequence WQGYSFKGIWGWMAKFAGLRT.

This sequence belongs to the mitochondrial Rho GTPase family.

Its subcellular location is the mitochondrion outer membrane. Functionally, mitochondrial GTPase involved in mitochondrial trafficking. Probably involved in control of anterograde transport of mitochondria and their subcellular distribution. In Cryptococcus neoformans var. neoformans serotype D (strain B-3501A) (Filobasidiella neoformans), this protein is Mitochondrial Rho GTPase 1 (GEM1).